A 410-amino-acid polypeptide reads, in one-letter code: Chloroacetanilide N-alkylformylase, ferredoxin reductase component (410 aa).

FAD contacts are provided by glycine 14, aspartate 36, lysine 49, valine 82, arginine 130, aspartate 279, and valine 298.

Belongs to the FAD-dependent oxidoreductase family. As to quaternary structure, the chloroacetanilide N-alkylformylase multicomponent enzyme system is composed of an oxygenase component (CndA) and an electron transfer component formed by a ferredoxin reductase (CndC1) and a ferredoxin (CndB1). In vitro, chloroacetanilide N-alkylformylase assays in which CndB1 is substituted for CndB2 demonstrate that the two enzymes possess nearly identical activities. Requires FAD as cofactor.

The catalysed reaction is 2 reduced [2Fe-2S]-[ferredoxin] + NAD(+) + H(+) = 2 oxidized [2Fe-2S]-[ferredoxin] + NADH. In terms of biological role, component of the chloroacetanilide N-alkylformylase multicomponent enzyme system involved in the degradation of chloroacetanilide herbicides (N-alkoxyalkyl-N-chloroacetyl-substituted aniline derivatives). In vitro, catalyzes the transfers of electrons from ferredoxin (CndB1) to NADH. N-dealkylase utilizes NADH, but not NADPH, as the electron donor. This chain is Chloroacetanilide N-alkylformylase, ferredoxin reductase component, found in Rhizorhabdus wittichii (strain DC-6 / KACC 16600) (Sphingomonas wittichii).